Here is a 298-residue protein sequence, read N- to C-terminus: N-acetylmuramic acid 6-phosphate etherase 2 (298 aa).

The 164-residue stretch at 51 to 214 folds into the SIS domain; the sequence is IVSRFEQGGR…STAAMVRLGR (164 aa). E79 serves as the catalytic Proton donor. E110 is an active-site residue.

The protein belongs to the GCKR-like family. MurNAc-6-P etherase subfamily. Homodimer.

The enzyme catalyses N-acetyl-D-muramate 6-phosphate + H2O = N-acetyl-D-glucosamine 6-phosphate + (R)-lactate. Its pathway is amino-sugar metabolism; N-acetylmuramate degradation. Its function is as follows. Specifically catalyzes the cleavage of the D-lactyl ether substituent of MurNAc 6-phosphate, producing GlcNAc 6-phosphate and D-lactate. This is N-acetylmuramic acid 6-phosphate etherase 2 from Bacillus licheniformis (strain ATCC 14580 / DSM 13 / JCM 2505 / CCUG 7422 / NBRC 12200 / NCIMB 9375 / NCTC 10341 / NRRL NRS-1264 / Gibson 46).